A 427-amino-acid polypeptide reads, in one-letter code: Endothelin-1 receptor (427 aa).

The first 20 residues, methionine 1–serine 20, serve as a signal peptide directing secretion. Residues aspartate 21–lysine 80 are Extracellular-facing. Residues asparagine 29 and asparagine 62 are each glycosylated (N-linked (GlcNAc...) asparagine). The helical transmembrane segment at tyrosine 81 to leucine 102 threads the bilayer. At arginine 103–arginine 112 the chain is on the cytoplasmic side. A helical membrane pass occupies residues asparagine 113 to isoleucine 132. Topologically, residues aspartate 133–lysine 159 are extracellular. Residues cysteine 158 and cysteine 239 are joined by a disulfide bond. A helical transmembrane segment spans residues leucine 160–valine 181. The Cytoplasmic segment spans residues aspartate 182–glutamate 205. A helical transmembrane segment spans residues isoleucine 206 to phenylalanine 229. The Extracellular segment spans residues glutamate 230 to aspartate 256. A helical transmembrane segment spans residues tryptophan 257–methionine 278. The Cytoplasmic portion of the chain corresponds to threonine 279–lysine 306. Residues threonine 307 to leucine 328 traverse the membrane as a helical segment. The Extracellular portion of the chain corresponds to lysine 329–leucine 347. Residues leucine 348–valine 372 form a helical membrane-spanning segment. The Cytoplasmic segment spans residues serine 373–asparagine 427. Residues isoleucine 405–histidine 415 are compositionally biased toward polar residues. Residues isoleucine 405–asparagine 427 are disordered. Residues asparagine 416–asparagine 427 show a composition bias toward basic and acidic residues. The residue at position 425 (serine 425) is a Phosphoserine.

The protein belongs to the G-protein coupled receptor 1 family. Endothelin receptor subfamily. EDNRA sub-subfamily. Interacts with HDAC7 and KAT5.

The protein resides in the cell membrane. Its function is as follows. Receptor for endothelin-1. Mediates its action by association with G proteins that activate a phosphatidylinositol-calcium second messenger system. The rank order of binding affinities for ET-A is: ET1 &gt; ET2 &gt;&gt; ET3. In Ovis aries (Sheep), this protein is Endothelin-1 receptor.